The following is a 173-amino-acid chain: MARMNRPAPVEVSYKHMRFLITHNPTNATLSTFIEDLKKYGATTVVRVCEVTYDKTPLEKDGITVVDWPFDDGAPPPGKVVEDWLSLVKAKFCEAPGSCVAVHCVAGLGRAPVLVALALIESGMKYEDAIQFIRQKRRGAINSKQLTYLEKYRPKQRLRFKDPHTHKTRCCVM.

Residues 8–161 form the Tyrosine-protein phosphatase domain; the sequence is APVEVSYKHM…YRPKQRLRFK (154 aa). An intrachain disulfide couples Cys49 to Cys104. Asp72 serves as the catalytic Proton donor. The active-site Phosphocysteine intermediate is the Cys104. Arg110 contributes to the substrate binding site. Cys170 bears the Cysteine methyl ester mark. Cys170 carries S-farnesyl cysteine lipidation. The propeptide at 171 to 173 is removed in mature form; that stretch reads CVM.

Belongs to the protein-tyrosine phosphatase family. In terms of assembly, interacts with tubulin. Post-translationally, farnesylated. Farnesylation is required for membrane targeting. As to expression, mainly expressed in cardiomyocytes and skeletal muscle; also found in pancreas. Consistently overexpressed in colon cancer metastasis.

Its subcellular location is the cell membrane. The protein localises to the early endosome. The catalysed reaction is O-phospho-L-tyrosyl-[protein] + H2O = L-tyrosyl-[protein] + phosphate. With respect to regulation, inhibited by sodium orthovanadate and peroxovanadium compounds, and by pentamidine. Its function is as follows. Protein tyrosine phosphatase which stimulates progression from G1 into S phase during mitosis. Enhances cell proliferation, cell motility and invasive activity, and promotes cancer metastasis. May be involved in the progression of cardiac hypertrophy by inhibiting intracellular calcium mobilization in response to angiotensin II. The sequence is that of Protein tyrosine phosphatase type IVA 3 (PTP4A3) from Homo sapiens (Human).